The chain runs to 485 residues: Glutamyl-tRNA(Gln) amidotransferase subunit A (485 aa).

Active-site charge relay system residues include Lys-79 and Ser-154. The active-site Acyl-ester intermediate is Ser-178.

It belongs to the amidase family. GatA subfamily. As to quaternary structure, heterotrimer of A, B and C subunits.

The catalysed reaction is L-glutamyl-tRNA(Gln) + L-glutamine + ATP + H2O = L-glutaminyl-tRNA(Gln) + L-glutamate + ADP + phosphate + H(+). Its function is as follows. Allows the formation of correctly charged Gln-tRNA(Gln) through the transamidation of misacylated Glu-tRNA(Gln) in organisms which lack glutaminyl-tRNA synthetase. The reaction takes place in the presence of glutamine and ATP through an activated gamma-phospho-Glu-tRNA(Gln). This chain is Glutamyl-tRNA(Gln) amidotransferase subunit A, found in Bacillus pumilus (strain SAFR-032).